Reading from the N-terminus, the 622-residue chain is Probable potassium transport system protein Kup 1 (622 aa).

The next 12 membrane-spanning stretches (helical) occupy residues 7-27 (LLVL…TSPL), 50-70 (LISL…VLFL), 96-116 (TAIL…DAMI), 132-152 (VTPA…LLLF), 165-185 (FFGP…FVHI), 210-230 (VGIV…ALYA), 244-264 (WFTV…AFVL), 282-302 (ALLP…QAVI), 334-354 (IYLP…VFLF), 360-380 (LATA…VLSF), 391-411 (TWWA…FLGA), and 416-436 (IHDG…IMWT).

This sequence belongs to the HAK/KUP transporter (TC 2.A.72) family.

It is found in the cell inner membrane. The catalysed reaction is K(+)(in) + H(+)(in) = K(+)(out) + H(+)(out). Functionally, transport of potassium into the cell. Likely operates as a K(+):H(+) symporter. The polypeptide is Probable potassium transport system protein Kup 1 (Rhizobium meliloti (strain 1021) (Ensifer meliloti)).